We begin with the raw amino-acid sequence, 1835 residues long: MILKSFLLGNLLSLCMKIINSVVGVGLYYGFLTTFSIGPSYLFLLRARVMEEGTEKEVSATTGFITGQLMMFISIYYAPLHLALDRPHTITVLVLPYLLFHFFWNNHKHFFDYGSTTRNSMRNLSIQCVFLNNLIFQLFNHFILPSSTLARLVNIYMFRCNNKMLFVTSSFVGWLIGHIFFMKWVGLVLFWIRQNHSIRSNVLIRSNKYLVSELRNSMARIFSILLFITCVYYLGRIPSPIVTKKLKETSETEERGESAEETDVEIETTSETKGTKQEQEASTEEDPSLCSEEKEDPDKLDGNQGYQENWKLEILKDKDLFWFEKPLVTLLFDYKRWNRPLRYIKNDRFEKTVRNEMSQYFFHTCPSDGKKRISFTYPPSLSTFGEIIQRKMSLYTTDKLLSPEDPYNHWVYTNEQKRHNLSNEFINRIEALDRGTLTLDVLEKSTRLCNNENEQEFFPKIYDPFLNGPYRGTTKKVYSRSIMDDSITWTEDSIEMVWINKIHDIFPNDYREFEQKMDLFNGESLSTDIGHSLTSINKFAGESAPNLNLKGLALLAEQRRLDSENQTKCLKFLSDVVTTDPNDQTIQNKYIGIEEIGKKVPRWSYKLTDHLEEQEKENEEESTEDHGIRSRKAKRVVIYTDNDQNTNTYTSTSTNSDQAEELALIRYSQQSDFRRDLIKGSMRAQRRKTVTWEMFQANVHSPLFLDRIDKTFFFSFDISGMMNLIFRNWVGKGPEFKTSDSEEKEAKEKEKTKEEKKEENERIAIAETWDTIIFAQAIRGSMLVTQSILRKYIVLPSLIIAKNLGRMLLFQFPEWYEDWKEWNREMHVKCTYNGVQLSETEFPKDWLTDGIQIKILFPFCLKPWHRSKLRSHHRDRMKKKGKKENFCFLTVWGMETELPFGSSRKRPSFFEPICKELEKKIRKVKKKCFLVLRALGERTKWFLRVLKEKTRWILKTVLFIKRIIKEFAKVNPILLFGLRKVYEPNENRKDSITNNKINHESIIRIRSVDWTNYSLTEKKMKDLADRTTTIRNKIERITKDKRKIFLTPDIKISPNETGCDDKRSESQKHIWQISKRRSARLIRKWHYFMKSFIERIYMDIFLCTINIPRRNAHLFLESTKKIIDKDIYNDERNKEGIDETNQNAIHFISTIKKSLSNISNNKSQIYCDLSSLSQAYVFYNLLQIQVINKYYLRFVLQYRGAYLFLKDRIKDHFGTRGILDAKSRPKKPPNSGMNEWKNWLRGHYQYNLSQTRWSRLVPQKWRNRVNQRRTIQNKDSKKDSYEKDQFIHYEKQNNYVVNSLPNKKEKFKKHYRYDLLSHKYIHYEDRKDSYIYGSPLQVNVNGDREIPYNYNTPKPESFYVPRGIAISDYLGEESIIDTGKNPDRKYLEWRILNFFLRKNIDIETWIDIDTGTNINKNAKTGTNDYQIIDKKDLFYLPIHQEINPSNQKQGFFFDWMGMNEEMLYRPISNLEPWFFSEFVLLYDAYKIKPWIIPIKLLIFNLNGNENISENKNINRNQKKDLRLSSNQKEYLELENRNQEEKEQLGQGNLGSDPRNRQKDLEKDYAESDIKKRRKKRQSKSNKEAELNFFLKRYLLFQLRWDDPLNQRMINNIKVYCLLLRLINPKEIAISSIQRGEMRLDVMLIQKDLTLTELIKRGILIIEPVRLSIKWDGQWIMYQTIGISLVHKNKYQTNRICREKKYVDENSFDRSIAQHGKVLVNGDENNYALLVPENIPSPRRRRELRILICLNSENGNVVDRNSVFFNGNNVRNCVQFLDEDKHFDTDINKFIQFKLFLCPNYRLEDLACMNRYWFDTNNGSRFSMSRIHMYPRFRIS.

Transmembrane regions (helical) follow at residues 25–45, 64–84, 87–107, 124–144, 172–192, and 221–241; these read VGLY…LFLL, FITG…HLAL, PHTI…WNNH, LSIQ…HFIL, VGWL…LFWI, and IFSI…PSPI. The span at 246-258 shows a compositional bias: basic and acidic residues; that stretch reads LKETSETEERGES. Disordered regions lie at residues 246–304, 735–759, and 1535–1578; these read LKET…DGNQ, EFKT…KKEE, and NRNQ…KRQS. Acidic residues predominate over residues 259 to 268; that stretch reads AEETDVEIET. Residues 1553–1569 are compositionally biased toward basic and acidic residues; that stretch reads PRNRQKDLEKDYAESDI.

This sequence belongs to the TIC214 family. In terms of assembly, part of the Tic complex.

It is found in the plastid. The protein localises to the chloroplast inner membrane. In terms of biological role, involved in protein precursor import into chloroplasts. May be part of an intermediate translocation complex acting as a protein-conducting channel at the inner envelope. This Liriodendron tulipifera (Tuliptree) protein is Protein TIC 214.